The following is a 421-amino-acid chain: Serine--tRNA ligase (421 aa).

232–234 (TAE) is an L-serine binding site. 262-264 (RSE) provides a ligand contact to ATP. Glu-285 is a binding site for L-serine. 349-352 (EVSS) contributes to the ATP binding site. L-serine is bound at residue Ser-384.

Belongs to the class-II aminoacyl-tRNA synthetase family. Type-1 seryl-tRNA synthetase subfamily. Homodimer. The tRNA molecule binds across the dimer.

Its subcellular location is the cytoplasm. The catalysed reaction is tRNA(Ser) + L-serine + ATP = L-seryl-tRNA(Ser) + AMP + diphosphate + H(+). It catalyses the reaction tRNA(Sec) + L-serine + ATP = L-seryl-tRNA(Sec) + AMP + diphosphate + H(+). Its pathway is aminoacyl-tRNA biosynthesis; selenocysteinyl-tRNA(Sec) biosynthesis; L-seryl-tRNA(Sec) from L-serine and tRNA(Sec): step 1/1. Its function is as follows. Catalyzes the attachment of serine to tRNA(Ser). Is also able to aminoacylate tRNA(Sec) with serine, to form the misacylated tRNA L-seryl-tRNA(Sec), which will be further converted into selenocysteinyl-tRNA(Sec). In Mycoplasma mobile (strain ATCC 43663 / 163K / NCTC 11711) (Mesomycoplasma mobile), this protein is Serine--tRNA ligase.